We begin with the raw amino-acid sequence, 116 residues long: Fluoride-specific ion channel FluC 1 (116 aa).

A run of 4 helical transmembrane segments spans residues 1 to 21, 32 to 52, 54 to 74, and 93 to 113; these read MYAP…RYLV, FPLG…WLAG, GAAD…FTTF, and VVVY…LGYH. G69 and T72 together coordinate Na(+).

It belongs to the fluoride channel Fluc/FEX (TC 1.A.43) family.

The protein resides in the cell membrane. It carries out the reaction fluoride(in) = fluoride(out). Na(+) is not transported, but it plays an essential structural role and its presence is essential for fluoride channel function. Its function is as follows. Fluoride-specific ion channel. Important for reducing fluoride concentration in the cell, thus reducing its toxicity. This chain is Fluoride-specific ion channel FluC 1, found in Geobacillus kaustophilus (strain HTA426).